The following is a 599-amino-acid chain: Aspartate--tRNA(Asp/Asn) ligase (599 aa).

Residue Glu-172 participates in L-aspartate binding. An aspartate region spans residues 196–199 (QLFK). Arg-218 contacts L-aspartate. Residues 218–220 (RDE) and Gln-227 contribute to the ATP site. His-454 contacts L-aspartate. Glu-488 contacts ATP. Residue Arg-495 coordinates L-aspartate. 540-543 (GLDR) is a binding site for ATP.

It belongs to the class-II aminoacyl-tRNA synthetase family. Type 1 subfamily. In terms of assembly, homodimer.

The protein resides in the cytoplasm. It catalyses the reaction tRNA(Asx) + L-aspartate + ATP = L-aspartyl-tRNA(Asx) + AMP + diphosphate. Its function is as follows. Aspartyl-tRNA synthetase with relaxed tRNA specificity since it is able to aspartylate not only its cognate tRNA(Asp) but also tRNA(Asn). Reaction proceeds in two steps: L-aspartate is first activated by ATP to form Asp-AMP and then transferred to the acceptor end of tRNA(Asp/Asn). The sequence is that of Aspartate--tRNA(Asp/Asn) ligase from Methylibium petroleiphilum (strain ATCC BAA-1232 / LMG 22953 / PM1).